The following is a 169-amino-acid chain: Cell cycle link protein (169 aa).

The binding to host SKP1 protein stretch occupies residues 9–22 (LPEELRQKIVHDHL). An LXCXE motif, interaction with host RBR motif is present at residues 110 to 114 (LLCRE).

The protein belongs to the nanovirus Clink protein family. As to quaternary structure, interacts with host SKP1. Interacts (via LXCXE domain) with host retinoblastoma-related protein 1 (RBR1). Interacts (via LXCXE domain) with retinoblastoma-related proteins (RBR).

Interacts with and disrupts the function of host retinoblastoma-related proteins RBR, which are key regulators of the cell cycle. Induces transcriptional activation of E2F-regulated S-phase and G2/M-phase-specific genes. Inactivation of the ability of RBR to arrest the cell cycle leads to the stimulation of viral DNA replication. This chain is Cell cycle link protein (DNA-C), found in Cicer arietinum (Chickpea).